Consider the following 215-residue polypeptide: Ribonuclease T (215 aa).

The Exonuclease domain occupies 20 to 194 (VVIDVETAGF…YDTLQTAKLF (175 aa)). The Mg(2+) site is built by D23, E25, H181, and D186. H181 acts as the Proton donor/acceptor in catalysis.

This sequence belongs to the RNase T family. As to quaternary structure, homodimer. The cofactor is Mg(2+).

In terms of biological role, trims short 3' overhangs of a variety of RNA species, leaving a one or two nucleotide 3' overhang. Responsible for the end-turnover of tRNA: specifically removes the terminal AMP residue from uncharged tRNA (tRNA-C-C-A). Also appears to be involved in tRNA biosynthesis. The polypeptide is Ribonuclease T (Yersinia pseudotuberculosis serotype I (strain IP32953)).